The following is a 404-amino-acid chain: Phosphoglycerate kinase (404 aa).

Residues 21-23 (DFN), R36, 59-62 (HLGR), R119, and R162 each bind substrate. Residues K213, G300, E331, and 360 to 363 (GGDS) contribute to the ATP site.

It belongs to the phosphoglycerate kinase family. Monomer.

The protein resides in the cytoplasm. It carries out the reaction (2R)-3-phosphoglycerate + ATP = (2R)-3-phospho-glyceroyl phosphate + ADP. It functions in the pathway carbohydrate degradation; glycolysis; pyruvate from D-glyceraldehyde 3-phosphate: step 2/5. This chain is Phosphoglycerate kinase, found in Oenococcus oeni (strain ATCC BAA-331 / PSU-1).